Consider the following 274-residue polypeptide: Large ribosomal subunit protein uL2 (274 aa).

2 disordered regions span residues 38–57 and 224–256; these read KRTG…VGGG and AMNP…KGYK. Residues 229–239 are compositionally biased toward basic and acidic residues; that stretch reads DHPHGGGEGRN.

Belongs to the universal ribosomal protein uL2 family. Part of the 50S ribosomal subunit. Forms a bridge to the 30S subunit in the 70S ribosome.

Its function is as follows. One of the primary rRNA binding proteins. Required for association of the 30S and 50S subunits to form the 70S ribosome, for tRNA binding and peptide bond formation. It has been suggested to have peptidyltransferase activity; this is somewhat controversial. Makes several contacts with the 16S rRNA in the 70S ribosome. The protein is Large ribosomal subunit protein uL2 of Acinetobacter baumannii (strain AB307-0294).